The following is a 740-amino-acid chain: DNA (cytosine-5)-methyltransferase 3C (740 aa).

Disordered regions lie at residues 75 to 99 (LTGD…PVMP) and 248 to 312 (FKPT…DVTN). Residues 309 to 441 (DVTNNKGNLE…LQDFFTTDPD (133 aa)) form the ADD domain. Residues 320–350 (HCLSCGRKDPVSFHPLFEGGLCQSCRDRFLE) form a GATA-type; atypical zinc finger. Residues 361 to 417 (QSYCTVCCEGRELLLCSNTSCCRCFCVECLEVLVGAGTAEDVKLQEPWSCYMCLPQR) form a PHD-type; atypical zinc finger. The region spanning 462 to 740 (IRVLSLFDGI…APLKDHFACE (279 aa)) is the SAM-dependent MTase C5-type domain. S-adenosyl-L-methionine contacts are provided by isoleucine 471, threonine 473, glutamate 492, aspartate 514, and isoleucine 515. Cysteine 538 is an active-site residue. Positions 719 and 721 each coordinate S-adenosyl-L-methionine.

This sequence belongs to the class I-like SAM-binding methyltransferase superfamily. C5-methyltransferase family. In terms of assembly, homodimer. Interacts with DNMT3L. Interacts with SPOCD1; recruiting Dnmt3C to transposons. As to expression, specifically expressed in testis.

It localises to the nucleus. The catalysed reaction is a 2'-deoxycytidine in DNA + S-adenosyl-L-methionine = a 5-methyl-2'-deoxycytidine in DNA + S-adenosyl-L-homocysteine + H(+). In terms of biological role, DNA methyltransferase that specifically methylates the promoters of evolutionarily young retrotransposons in the male germline. De novo methylation and subsequent repression of transposable elements prevents their mobilization, which is essential for germline integrity. Compared to Dnmt3a and Dnmt3b, shows lower DNA methyltransferase efficiency. This chain is DNA (cytosine-5)-methyltransferase 3C, found in Mus musculus (Mouse).